A 230-amino-acid polypeptide reads, in one-letter code: CDP-diacylglycerol--inositol 3-phosphatidyltransferase (230 aa).

Residues 1 to 28 (MPSAKSSDLSPTKTNLESTTKQKVSVQD) lie on the Cytoplasmic side of the membrane. A helical transmembrane segment spans residues 29 to 51 (IFLYIPNLIGYLRIITAIISFLC). The Lumenal portion of the chain corresponds to 52–57 (MANHPV). A helical transmembrane segment spans residues 58-77 (ATLIFYGISGFLDAFDGYAA). Mg(2+) is bound by residues aspartate 70 and aspartate 73. A CDP-1,2-diacyl-sn-glycerol-binding residues include glycine 74, arginine 78, and threonine 84. Residues 78 to 89 (RKFNQGTRFGAV) are Cytoplasmic-facing. The chain crosses the membrane as a helical span at residues 90–110 (LDMVTDRCATSSLIVYLGVLY). 2 residues coordinate Mg(2+): aspartate 91 and aspartate 95. Aspartate 95 functions as the Proton acceptor in the catalytic mechanism. Topologically, residues 111–112 (PQ) are lumenal. A helical transmembrane segment spans residues 113–133 (YTVFWQILVSLDLSSHYMHMY). Residues 134-161 (AMLSAGSTSHKNVDETQSKLLSLYYNNR) lie on the Cytoplasmic side of the membrane. The chain crosses the membrane as a helical span at residues 162-182 (LVLFFVCLINELFYMAVYLHY). The Lumenal segment spans residues 183–184 (YK). A helical membrane pass occupies residues 185-205 (FFWLGTVMLVASTPIWLFKQI). Residues 206–230 (ANIIQLKNASLILARMDAHDHSKRD) lie on the Cytoplasmic side of the membrane.

Belongs to the CDP-alcohol phosphatidyltransferase class-I family. The cofactor is Mn(2+). Requires Mg(2+) as cofactor.

It is found in the endoplasmic reticulum membrane. The enzyme catalyses a CDP-1,2-diacyl-sn-glycerol + myo-inositol = a 1,2-diacyl-sn-glycero-3-phospho-(1D-myo-inositol) + CMP + H(+). With respect to regulation, inhibited by calcium and zinc ions. Inhibited by nucleoside triphosphates and diphosphates. Catalyzes the synthesis of phosphatidylinositol (PtdIns). Required for proper membrane dynamics and cell wall integrity. In Candida albicans (strain SC5314 / ATCC MYA-2876) (Yeast), this protein is CDP-diacylglycerol--inositol 3-phosphatidyltransferase.